Consider the following 122-residue polypeptide: Large ribosomal subunit protein uL18 (122 aa).

It belongs to the universal ribosomal protein uL18 family. Part of the 50S ribosomal subunit; part of the 5S rRNA/L5/L18/L25 subcomplex. Contacts the 5S and 23S rRNAs.

In terms of biological role, this is one of the proteins that bind and probably mediate the attachment of the 5S RNA into the large ribosomal subunit, where it forms part of the central protuberance. The protein is Large ribosomal subunit protein uL18 of Thermotoga neapolitana (strain ATCC 49049 / DSM 4359 / NBRC 107923 / NS-E).